Reading from the N-terminus, the 422-residue chain is Replication factor C large subunit (422 aa).

63–70 lines the ATP pocket; that stretch reads GPPGVGKT.

The protein belongs to the activator 1 small subunits family. RfcL subfamily. As to quaternary structure, heteromultimer composed of small subunits (RfcS) and large subunits (RfcL).

Functionally, part of the RFC clamp loader complex which loads the PCNA sliding clamp onto DNA. The protein is Replication factor C large subunit of Pyrobaculum arsenaticum (strain DSM 13514 / JCM 11321 / PZ6).